Here is a 556-residue protein sequence, read N- to C-terminus: Aplysianin-A (556 aa).

The signal sequence occupies residues 1-19 (MAVRFLALGLLIFVTSCSG). 6 N-linked (GlcNAc...) asparagine glycosylation sites follow: asparagine 150, asparagine 177, asparagine 374, asparagine 399, asparagine 414, and asparagine 430.

The protein to A.fulica achacin protein. Homotetramer. Albumen gland.

In terms of biological role, has antibacterial activity against Gram-negative and Gram-positive bacteria. The sequence is that of Aplysianin-A from Aplysia kurodai (Kuroda's sea hare).